A 241-amino-acid polypeptide reads, in one-letter code: Carboxy-S-adenosyl-L-methionine synthase (241 aa).

Residues Tyr38, 63 to 65 (GCS), 88 to 89 (DN), 116 to 117 (DI), Asn131, and Arg198 contribute to the S-adenosyl-L-methionine site.

The protein belongs to the class I-like SAM-binding methyltransferase superfamily. Cx-SAM synthase family. In terms of assembly, homodimer.

The catalysed reaction is prephenate + S-adenosyl-L-methionine = carboxy-S-adenosyl-L-methionine + 3-phenylpyruvate + H2O. Catalyzes the conversion of S-adenosyl-L-methionine (SAM) to carboxy-S-adenosyl-L-methionine (Cx-SAM). In Mannheimia succiniciproducens (strain KCTC 0769BP / MBEL55E), this protein is Carboxy-S-adenosyl-L-methionine synthase.